Here is a 162-residue protein sequence, read N- to C-terminus: D-aminoacyl-tRNA deacylase (162 aa).

A Gly-cisPro motif, important for rejection of L-amino acids motif is present at residues 145–146 (GP).

This sequence belongs to the DTD family. Homodimer.

The protein localises to the cytoplasm. The catalysed reaction is glycyl-tRNA(Ala) + H2O = tRNA(Ala) + glycine + H(+). The enzyme catalyses a D-aminoacyl-tRNA + H2O = a tRNA + a D-alpha-amino acid + H(+). An aminoacyl-tRNA editing enzyme that deacylates mischarged D-aminoacyl-tRNAs. Also deacylates mischarged glycyl-tRNA(Ala), protecting cells against glycine mischarging by AlaRS. Acts via tRNA-based rather than protein-based catalysis; rejects L-amino acids rather than detecting D-amino acids in the active site. By recycling D-aminoacyl-tRNA to D-amino acids and free tRNA molecules, this enzyme counteracts the toxicity associated with the formation of D-aminoacyl-tRNA entities in vivo and helps enforce protein L-homochirality. The polypeptide is D-aminoacyl-tRNA deacylase (Bifidobacterium longum (strain DJO10A)).